Here is a 286-residue protein sequence, read N- to C-terminus: Protease HtpX (286 aa).

The next 2 helical transmembrane spans lie at 4–24 and 33–53; these read ILLF…ILSL and TGLL…SLFL. His139 contributes to the Zn(2+) binding site. The active site involves Glu140. His143 is a Zn(2+) binding site. Helical transmembrane passes span 147–167 and 186–206; these read GDMV…IFVS and IYFL…SMIA. Position 214 (Glu214) interacts with Zn(2+).

Belongs to the peptidase M48B family. Zn(2+) serves as cofactor.

It localises to the cell inner membrane. The chain is Protease HtpX from Pasteurella multocida (strain Pm70).